The following is an 830-amino-acid chain: Periplasmic nitrate reductase (830 aa).

Positions 1 to 31 (MKLSRRDFMKANAAVAAAAAAGMTIPTVAKA) form a signal peptide, tat-type signal. Positions 39–95 (IKWDKAPCRFCGTGCGVLVGTQNGRIVASQGDPDSPVNRGLNCIKGYFLPKIMYGKD) constitute a 4Fe-4S Mo/W bis-MGD-type domain. 4 residues coordinate [4Fe-4S] cluster: C46, C49, C53, and C81. Mo-bis(molybdopterin guanine dinucleotide)-binding positions include K83, Q150, N175, C179, 212–219 (WGSNMAEM), 243–247 (STYEH), 262–264 (QTD), M372, Q376, N482, 508–509 (SD), K531, D558, and 718–727 (TGRVLEHWHT). F794 contributes to the substrate binding site. Residues N802 and K819 each coordinate Mo-bis(molybdopterin guanine dinucleotide).

The protein belongs to the prokaryotic molybdopterin-containing oxidoreductase family. NasA/NapA/NarB subfamily. Component of the periplasmic nitrate reductase NapAB complex composed of NapA and NapB. [4Fe-4S] cluster is required as a cofactor. Requires Mo-bis(molybdopterin guanine dinucleotide) as cofactor. Predicted to be exported by the Tat system. The position of the signal peptide cleavage has not been experimentally proven.

It localises to the periplasm. The catalysed reaction is 2 Fe(II)-[cytochrome] + nitrate + 2 H(+) = 2 Fe(III)-[cytochrome] + nitrite + H2O. Catalytic subunit of the periplasmic nitrate reductase complex NapAB. Receives electrons from NapB and catalyzes the reduction of nitrate to nitrite. The sequence is that of Periplasmic nitrate reductase from Yersinia pseudotuberculosis serotype IB (strain PB1/+).